Consider the following 287-residue polypeptide: Putative syntaxin-4 (287 aa).

The Cytoplasmic segment spans residues 1–262 (MHQISGINAA…NRKWKIVTCI (262 aa)). Residues 65-97 (KCRKLNDHVDKFIAQARGIRRRLADASEELVQY) adopt a coiled-coil conformation. One can recognise a t-SNARE coiled-coil homology domain in the interval 184–246 (FDDMKNRATD…EQAQQNVRQA (63 aa)). A helical; Anchor for type IV membrane protein transmembrane segment spans residues 263–283 (ALIVLLLVVVYLLSHFLGAII). Topologically, residues 284–287 (PGWK) are extracellular.

This sequence belongs to the syntaxin family.

It is found in the membrane. In terms of biological role, potentially involved in docking of synaptic vesicles at presynaptic active zones. This is Putative syntaxin-4 (syx-4) from Caenorhabditis elegans.